Reading from the N-terminus, the 435-residue chain is NADH-quinone oxidoreductase subunit D (435 aa).

This sequence belongs to the complex I 49 kDa subunit family. In terms of assembly, NDH-1 is composed of 14 different subunits. Subunits NuoB, C, D, E, F, and G constitute the peripheral sector of the complex.

It is found in the cell inner membrane. It catalyses the reaction a quinone + NADH + 5 H(+)(in) = a quinol + NAD(+) + 4 H(+)(out). Its function is as follows. NDH-1 shuttles electrons from NADH, via FMN and iron-sulfur (Fe-S) centers, to quinones in the respiratory chain. The immediate electron acceptor for the enzyme in this species is believed to be ubiquinone. Couples the redox reaction to proton translocation (for every two electrons transferred, four hydrogen ions are translocated across the cytoplasmic membrane), and thus conserves the redox energy in a proton gradient. The sequence is that of NADH-quinone oxidoreductase subunit D from Xylella fastidiosa (strain M12).